The sequence spans 719 residues: MFGQGYYQGNRDQDSPLQRPPAAQFSSAYMEQQGSHQSLQEHLAYEQLQLQQQQQQQQQHAAAPHANGDGYGAGFTDIPTMLGSVGAPSPAFQPPMVVGMQQQPINTPPPTATSIYSQNNNSFTNVNDTTLAPGHSSPGHYSNSSDYSGQQPASSAYKQFGGSESPLQPAALPGLLDGSLGDQTLVGNQSSQGAMLSRQSLQCSSVPQSPNGGQRQTSGVGNYMYFERRPELLSKSTQEKAAAVKLKVENFYQSSVNHAIERNQRRVELESQLLSHGWSEERKNRQLSSLGKKESQFLRLRRTRLSLEDFHTVKVIGKGAFGEVRLVQKKDTGKIYAMKTLLKSEMYKKDQLAHVKAERDVLAGSDSPWVVSLYYSFQDAQYLYLIMEFLPGGDLMTMLIRWQIFTEDVTRFYMAECILAIEAIHKLGFIHRDIKPDNILIDIRGHIKLSDFGLSTGFHKTHDSNYYKKLLQEDEQQQNGGNMGKYPASGGGGNGGGNRNTMLVDAIHLTMTNRQQMQTWRKSRRLMAYSTVGTPDYIAPEIFLYQGYGQECDWWSLGAIMYECLIGWPPFCSETPQETYRKIMNFEQTLVFPDDIHISYEAEDLIRRLLSHADERLGRHGANEIKNHPFFRGVDWETIRQVGAPYIPKLSSVTDTRFFPTDELENVPDSPAMAQAAKQREQMLKQGGSAANTAQAKEDLPFIGYTYSRFDYLTRKNAL.

Disordered regions lie at residues 1–75 (MFGQ…GAGF) and 100–219 (MQQQ…QTSG). Residues 24–38 (QFSSAYMEQQGSHQS) are compositionally biased toward polar residues. The span at 40 to 63 (QEHLAYEQLQLQQQQQQQQQHAAA) shows a compositional bias: low complexity. Polar residues-rich tracts occupy residues 112–130 (ATSI…NDTT), 139–157 (GHYS…SSAY), and 181–219 (GDQT…QTSG). One can recognise a Protein kinase domain in the interval 310–631 (FHTVKVIGKG…ANEIKNHPFF (322 aa)). Residues 316–324 (IGKGAFGEV) and Lys339 each bind ATP. Asp433 serves as the catalytic Proton acceptor. Positions 632-717 (RGVDWETIRQ…SRFDYLTRKN (86 aa)) constitute an AGC-kinase C-terminal domain.

It belongs to the protein kinase superfamily. STE Ser/Thr protein kinase family. COT1 subfamily.

The catalysed reaction is L-seryl-[protein] + ATP = O-phospho-L-seryl-[protein] + ADP + H(+). The enzyme catalyses L-threonyl-[protein] + ATP = O-phospho-L-threonyl-[protein] + ADP + H(+). Functionally, protein kinase that seems to play a role in the regulation of cell morphogenesis and proliferation. This chain is Serine/threonine-protein kinase CBK1 (CBK1), found in Eremothecium gossypii (strain ATCC 10895 / CBS 109.51 / FGSC 9923 / NRRL Y-1056) (Yeast).